Here is a 314-residue protein sequence, read N- to C-terminus: MSNSASSFADVSSGCTAGTPVPADSPIRDNIADAVRRVRETTPLAQSFTNFVTINLVANAQLAAGGTAAMSFLPDDVIETAKIAGANYINVGTLLPFYKDALPEIAQRLNYLDKPWVLDPVAAGIGHTRTAILQTFKAAPPTMIRANASEVIALANMWGLNTETVGDASEHRPAGVESVDDVESATGAAVALAQYLTEQHAKHSSHDASTRCAVAVSGIADLVTDGETVYRLPGGSAMMTKITGAGCSLGGVAATYLAVSDPLTAALSASLLYNRAAEIADTTSHGPGSFQVAFLDALWNVTAEQVAESEILVQ.

Over residues 1–13 the composition is skewed to low complexity; that stretch reads MSNSASSFADVSS. The interval 1-24 is disordered; that stretch reads MSNSASSFADVSSGCTAGTPVPAD. Met-70 lines the substrate pocket. Arg-145 and Ser-217 together coordinate ATP. Gly-244 lines the substrate pocket.

This sequence belongs to the Thz kinase family. The cofactor is Mg(2+).

The enzyme catalyses 5-(2-hydroxyethyl)-4-methylthiazole + ATP = 4-methyl-5-(2-phosphooxyethyl)-thiazole + ADP + H(+). Its pathway is cofactor biosynthesis; thiamine diphosphate biosynthesis; 4-methyl-5-(2-phosphoethyl)-thiazole from 5-(2-hydroxyethyl)-4-methylthiazole: step 1/1. Its function is as follows. Catalyzes the phosphorylation of the hydroxyl group of 4-methyl-5-beta-hydroxyethylthiazole (THZ). The protein is Hydroxyethylthiazole kinase of Bifidobacterium longum subsp. infantis (strain ATCC 15697 / DSM 20088 / JCM 1222 / NCTC 11817 / S12).